Reading from the N-terminus, the 645-residue chain is 1-phosphatidylinositol 4,5-bisphosphate phosphodiesterase zeta-1 (645 aa).

The 36-residue stretch at 42–77 (CHFAHVKRIFKENDRHNQGRITTEDFRTIYRCIVHR) folds into the EF-hand domain. Positions 162 to 306 (QDMNKPLNDY…LKFKILVKNK (145 aa)) constitute a PI-PLC X-box domain. Residues His-177 and His-222 contribute to the active site. The 117-residue stretch at 385–501 (LSDLVIYTKA…GYVLKPDFLR (117 aa)) folds into the PI-PLC Y-box domain. Residues 501–625 (RDTTLGFNPN…KGYRRVPLFS (125 aa)) enclose the C2 domain.

As to quaternary structure, interacts via its C2 domain with PtdIns(3)P and, to a lesser extent, PtdIns(5)P in vitro. It depends on Ca(2+) as a cofactor.

It localises to the nucleus. The protein localises to the cytoplasm. The protein resides in the perinuclear region. The catalysed reaction is a 1,2-diacyl-sn-glycero-3-phospho-(1D-myo-inositol-4,5-bisphosphate) + H2O = 1D-myo-inositol 1,4,5-trisphosphate + a 1,2-diacyl-sn-glycerol + H(+). Functionally, the production of the second messenger molecules diacylglycerol (DAG) and inositol 1,4,5-trisphosphate (IP3) is mediated by activated phosphatidylinositol-specific phospholipase C enzymes. In vitro, hydrolyzes PtdIns(4,5)P2 in a Ca(2+)-dependent manner. Triggers intracellular Ca(2+) oscillations in oocytes solely during M phase and is involved in inducing oocyte activation and initiating embryonic development up to the blastocyst stage. Is therefore a strong candidate for the egg-activating soluble sperm factor that is transferred from the sperm into the egg cytoplasm following gamete membrane fusion. May exert an inhibitory effect on phospholipase-C-coupled processes that depend on calcium ions and protein kinase C, including CFTR trafficking and function. This is 1-phosphatidylinositol 4,5-bisphosphate phosphodiesterase zeta-1 from Rattus norvegicus (Rat).